A 292-amino-acid polypeptide reads, in one-letter code: Protoheme IX farnesyltransferase (292 aa).

Transmembrane regions (helical) follow at residues 13–33, 35–55, 84–104, 106–126, 135–155, 161–181, 206–226, 231–251, and 263–283; these read ILFG…QGHV, FLLL…GCVV, TALI…WFWV, PYSF…YSLW, TIIG…AVTH, ALLI…AIAI, VECL…YCFG, FFLL…IIGF, and LFLF…FTYQ.

It belongs to the UbiA prenyltransferase family. Protoheme IX farnesyltransferase subfamily.

It is found in the cell inner membrane. The catalysed reaction is heme b + (2E,6E)-farnesyl diphosphate + H2O = Fe(II)-heme o + diphosphate. Its pathway is porphyrin-containing compound metabolism; heme O biosynthesis; heme O from protoheme: step 1/1. Functionally, converts heme B (protoheme IX) to heme O by substitution of the vinyl group on carbon 2 of heme B porphyrin ring with a hydroxyethyl farnesyl side group. In Acinetobacter baylyi (strain ATCC 33305 / BD413 / ADP1), this protein is Protoheme IX farnesyltransferase.